The chain runs to 546 residues: Chaperonin GroEL (546 aa).

ATP contacts are provided by residues 30 to 33, Lys51, 87 to 91, Gly415, 479 to 481, and Asp495; these read TLGP, DGTTT, and NAA.

It belongs to the chaperonin (HSP60) family. As to quaternary structure, forms a cylinder of 14 subunits composed of two heptameric rings stacked back-to-back. Interacts with the co-chaperonin GroES.

It is found in the cytoplasm. It carries out the reaction ATP + H2O + a folded polypeptide = ADP + phosphate + an unfolded polypeptide.. Together with its co-chaperonin GroES, plays an essential role in assisting protein folding. The GroEL-GroES system forms a nano-cage that allows encapsulation of the non-native substrate proteins and provides a physical environment optimized to promote and accelerate protein folding. The protein is Chaperonin GroEL of Pseudomonas putida (strain ATCC 47054 / DSM 6125 / CFBP 8728 / NCIMB 11950 / KT2440).